A 453-amino-acid chain; its full sequence is tRNA modification GTPase MnmE (453 aa).

3 residues coordinate (6S)-5-formyl-5,6,7,8-tetrahydrofolate: Arg-22, Glu-79, and Lys-119. One can recognise a TrmE-type G domain in the interval 215 to 376; the sequence is GMKVVIAGRP…LKQHLKSLMG (162 aa). Asn-225 contacts K(+). Residues 225–230, 244–250, 269–272, and 334–337 each bind GTP; these read NAGKSS, TEIAGTT, DTAG, and NKAD. Residue Ser-229 coordinates Mg(2+). Thr-244, Ile-246, and Thr-249 together coordinate K(+). Thr-250 lines the Mg(2+) pocket. Position 453 (Lys-453) interacts with (6S)-5-formyl-5,6,7,8-tetrahydrofolate.

It belongs to the TRAFAC class TrmE-Era-EngA-EngB-Septin-like GTPase superfamily. TrmE GTPase family. As to quaternary structure, homodimer. Heterotetramer of two MnmE and two MnmG subunits. K(+) serves as cofactor.

Its subcellular location is the cytoplasm. Exhibits a very high intrinsic GTPase hydrolysis rate. Involved in the addition of a carboxymethylaminomethyl (cmnm) group at the wobble position (U34) of certain tRNAs, forming tRNA-cmnm(5)s(2)U34. The protein is tRNA modification GTPase MnmE of Shewanella frigidimarina (strain NCIMB 400).